The sequence spans 249 residues: Segregation and condensation protein A (249 aa).

It belongs to the ScpA family. As to quaternary structure, component of a cohesin-like complex composed of ScpA, ScpB and the Smc homodimer, in which ScpA and ScpB bind to the head domain of Smc. The presence of the three proteins is required for the association of the complex with DNA.

The protein localises to the cytoplasm. In terms of biological role, participates in chromosomal partition during cell division. May act via the formation of a condensin-like complex containing Smc and ScpB that pull DNA away from mid-cell into both cell halves. The chain is Segregation and condensation protein A from Clostridium acetobutylicum (strain ATCC 824 / DSM 792 / JCM 1419 / IAM 19013 / LMG 5710 / NBRC 13948 / NRRL B-527 / VKM B-1787 / 2291 / W).